The sequence spans 455 residues: Zinc finger SWIM domain-containing protein 1 (455 aa).

Residues 264-288 (ASLSLAETPQDSHTPSEASAENPNT) are disordered. The SWIM-type zinc finger occupies 333–375 (MSIQILEDTHTVQPQPPASCSCYFNQAFHLPCRHILAMLSARQ).

The chain is Zinc finger SWIM domain-containing protein 1 (Zswim1) from Mus musculus (Mouse).